The sequence spans 570 residues: 4-hydroxy-7-methoxy-3-oxo-3,4-dihydro-2H-1,4-benzoxazin-2-yl glucoside beta-D-glucosidase 1c, chloroplastic (570 aa).

A chloroplast-targeting transit peptide spans 1-50; the sequence is MALLAAATLNPTTHLSIRSRAGHNSENLWLRSAASSQKSKGRFCNLTVRA. Residues Gln92, His194, and 239 to 240 contribute to the a beta-D-glucoside site; that span reads NE. The active-site Proton donor is Glu240. Cys259 and Cys265 form a disulfide bridge. A beta-D-glucoside is bound by residues Tyr383, Glu456, Trp504, 511 to 512, and Phe520; that span reads EW. Catalysis depends on Glu456, which acts as the Nucleophile.

This sequence belongs to the glycosyl hydrolase 1 family. As to quaternary structure, homo- and heterohexamers. As to expression, expressed in young seedlings early after germination.

The protein resides in the plastid. It is found in the chloroplast. It carries out the reaction Hydrolysis of terminal, non-reducing beta-D-glucosyl residues with release of beta-D-glucose.. The enzyme catalyses DIMBOA beta-D-glucoside + H2O = DIMBOA + D-glucose. It catalyses the reaction DIBOA beta-D-glucoside + H2O = DIBOA + D-glucose. Acts in defense of young plant parts against pests via the production of hydroxamic acids from hydroxamic acid glucosides. Enzymatic activity is highly correlated with plant growth. The preferred substrate is DIMBOA-beta-D-glucoside. The protein is 4-hydroxy-7-methoxy-3-oxo-3,4-dihydro-2H-1,4-benzoxazin-2-yl glucoside beta-D-glucosidase 1c, chloroplastic (GLU1C) of Triticum aestivum (Wheat).